A 1403-amino-acid polypeptide reads, in one-letter code: Baculoviral IAP repeat-containing protein 1e (1403 aa).

BIR repeat units lie at residues 60–127 (EAKR…CEFL), 159–227 (EEAR…CEFL), and 278–345 (EELR…CVFL). Residues Cys-315, Cys-318, His-335, and Cys-342 each coordinate Zn(2+). Residues 464–759 (SVMCVEGETG…EFLAAVRLTE (296 aa)) enclose the NACHT domain. Position 473–478 (473–478 (GSGKTT)) interacts with ATP.

In terms of assembly, component of the NLRC4 inflammasome, at least composed of NLRC4, caspase-1 (CASP1) and some NAIP protein. Flagellin binding by NAIP5 triggers assembly of the inflammasome, a huge complex that contains a single NAIP5 chain and multiple copies of NLRC4. (Microbial infection) Interacts with S.typhimurium (Salmonella) flagellin. As to quaternary structure, (Microbial infection) Interacts with L.pneumophila flagellin. In terms of tissue distribution, detected in macrophages (at protein level).

Its function is as follows. Sensor component of the NLRC4 inflammasome that specifically recognizes and binds flagellin from pathogenic bacteria such as Legionella or Salmonella. Association of pathogenic bacteria proteins drives in turn drive assembly and activation of the NLRC4 inflammasome, promoting caspase-1 activation, cytokine production and macrophage pyroptosis. The NLRC4 inflammasome is activated as part of the innate immune response to a range of intracellular bacteria. The NLRC4 inflammasome senses Gram-negative bacteria such as L.pneumophila and P.aeruginosa, enteric pathogens S.typhimurium (Salmonella) and S.flexneri. May contribute to prevent motor-neuron apoptosis induced by a variety of signals. The polypeptide is Baculoviral IAP repeat-containing protein 1e (Mus musculus (Mouse)).